The following is a 423-amino-acid chain: Ferrochelatase, mitochondrial (423 aa).

The N-terminal 54 residues, 1 to 54 (MRSLGANMAAALRAAGVLLRDPLASSSWRVCQPWRWKSGAAAAAVTTETAQHAQ), are a transit peptide targeting the mitochondrion. The residue at position 57 (lysine 57) is an N6-acetyllysine. Protoporphyrin IX contacts are provided by arginine 115, tyrosine 123, and serine 130. Position 138 is an N6-succinyllysine (lysine 138). Cysteine 196 provides a ligand contact to [2Fe-2S] cluster. Residues histidine 230 and aspartate 383 contribute to the active site. Positions 403, 406, and 411 each coordinate [2Fe-2S] cluster. Lysine 415 carries the post-translational modification N6-acetyllysine; alternate. Lysine 415 bears the N6-succinyllysine; alternate mark.

Belongs to the ferrochelatase family. Homodimer. Homotetramer. Interacts with PGRMC1; the interaction results in decreased FECH activity. Interacts with ABCB10 and SLC25A37; this interaction forms an oligomeric complex. Forms a complex with ABCB7 and ABCB10, where a dimeric FECH bridges ABCB7 and ABCB10 homodimers; this complex may be required for cellular iron homeostasis, mitochondrial function and heme biosynthesis. Interacts with ABCB7 and ABCB10. It depends on [2Fe-2S] cluster as a cofactor.

Its subcellular location is the mitochondrion inner membrane. It carries out the reaction heme b + 2 H(+) = protoporphyrin IX + Fe(2+). It functions in the pathway porphyrin-containing compound metabolism; protoheme biosynthesis; protoheme from protoporphyrin-IX: step 1/1. With respect to regulation, inhibited by nitric oxide (NO). The 2Fe-2S cluster could act as a NO sensor. In terms of biological role, catalyzes the ferrous insertion into protoporphyrin IX and participates in the terminal step in the heme biosynthetic pathway. The protein is Ferrochelatase, mitochondrial of Homo sapiens (Human).